Consider the following 426-residue polypeptide: UDP-N-acetylmuramoylalanine--D-glutamate ligase (426 aa).

An ATP-binding site is contributed by 112–118 (GSVGKST).

Belongs to the MurCDEF family.

It is found in the cytoplasm. It carries out the reaction UDP-N-acetyl-alpha-D-muramoyl-L-alanine + D-glutamate + ATP = UDP-N-acetyl-alpha-D-muramoyl-L-alanyl-D-glutamate + ADP + phosphate + H(+). The protein operates within cell wall biogenesis; peptidoglycan biosynthesis. In terms of biological role, cell wall formation. Catalyzes the addition of glutamate to the nucleotide precursor UDP-N-acetylmuramoyl-L-alanine (UMA). This is UDP-N-acetylmuramoylalanine--D-glutamate ligase from Thermosipho melanesiensis (strain DSM 12029 / CIP 104789 / BI429).